The chain runs to 491 residues: 2,3-bisphosphoglycerate-independent phosphoglycerate mutase (491 aa).

Residues D11 and S61 each contribute to the Mn(2+) site. The Phosphoserine intermediate role is filled by S61. Residues H118, 147–148 (RD), R177, R183, 247–250 (RNDR), and K320 contribute to the substrate site. D386, H390, D427, H428, and H445 together coordinate Mn(2+).

Belongs to the BPG-independent phosphoglycerate mutase family. Monomer. Mn(2+) serves as cofactor.

It carries out the reaction (2R)-2-phosphoglycerate = (2R)-3-phosphoglycerate. It functions in the pathway carbohydrate degradation; glycolysis; pyruvate from D-glyceraldehyde 3-phosphate: step 3/5. In terms of biological role, catalyzes the interconversion of 2-phosphoglycerate and 3-phosphoglycerate. The protein is 2,3-bisphosphoglycerate-independent phosphoglycerate mutase of Helicobacter pylori (strain ATCC 700392 / 26695) (Campylobacter pylori).